The primary structure comprises 374 residues: 3-dehydroquinate synthase (374 aa).

This sequence belongs to the archaeal-type DHQ synthase family.

It catalyses the reaction 2-amino-2,3,7-trideoxy-D-lyxo-hept-6-ulosonate + NAD(+) + H2O = 3-dehydroquinate + NH4(+) + NADH + H(+). Catalyzes the oxidative deamination and cyclization of 2-amino-3,7-dideoxy-D-threo-hept-6-ulosonic acid (ADH) to yield 3-dehydroquinate (DHQ), which is fed into the canonical shikimic pathway of aromatic amino acid biosynthesis. This chain is 3-dehydroquinate synthase, found in Methanocella arvoryzae (strain DSM 22066 / NBRC 105507 / MRE50).